The sequence spans 245 residues: Orotidine 5'-phosphate decarboxylase (245 aa).

Substrate-binding positions include D22, K44, 71-80 (DLKFHDIPNT), T131, R192, Q201, G221, and R222. K73 (proton donor) is an active-site residue.

The protein belongs to the OMP decarboxylase family. Type 1 subfamily. As to quaternary structure, homodimer.

It carries out the reaction orotidine 5'-phosphate + H(+) = UMP + CO2. It functions in the pathway pyrimidine metabolism; UMP biosynthesis via de novo pathway; UMP from orotate: step 2/2. Its function is as follows. Catalyzes the decarboxylation of orotidine 5'-monophosphate (OMP) to uridine 5'-monophosphate (UMP). This is Orotidine 5'-phosphate decarboxylase from Yersinia pseudotuberculosis serotype O:3 (strain YPIII).